The sequence spans 424 residues: Arginine biosynthesis bifunctional protein ArgJ (424 aa).

Residues T166, K192, T203, E290, N419, and T424 each contribute to the substrate site. The active-site Nucleophile is T203.

It belongs to the ArgJ family. In terms of assembly, heterotetramer of two alpha and two beta chains.

It localises to the cytoplasm. It carries out the reaction N(2)-acetyl-L-ornithine + L-glutamate = N-acetyl-L-glutamate + L-ornithine. The enzyme catalyses L-glutamate + acetyl-CoA = N-acetyl-L-glutamate + CoA + H(+). It functions in the pathway amino-acid biosynthesis; L-arginine biosynthesis; L-ornithine and N-acetyl-L-glutamate from L-glutamate and N(2)-acetyl-L-ornithine (cyclic): step 1/1. Its pathway is amino-acid biosynthesis; L-arginine biosynthesis; N(2)-acetyl-L-ornithine from L-glutamate: step 1/4. Catalyzes two activities which are involved in the cyclic version of arginine biosynthesis: the synthesis of N-acetylglutamate from glutamate and acetyl-CoA as the acetyl donor, and of ornithine by transacetylation between N(2)-acetylornithine and glutamate. The polypeptide is Arginine biosynthesis bifunctional protein ArgJ (Colwellia psychrerythraea (strain 34H / ATCC BAA-681) (Vibrio psychroerythus)).